Consider the following 67-residue polypeptide: MKATDLRQSTTEELNGKVGEWKEELFNLRFQLATGQLENPARIREVRKSIARAKTILRERELGINNG.

This sequence belongs to the universal ribosomal protein uL29 family.

The chain is Large ribosomal subunit protein uL29 from Exiguobacterium sp. (strain ATCC BAA-1283 / AT1b).